A 452-amino-acid chain; its full sequence is GTPase Der (452 aa).

EngA-type G domains are found at residues 4 to 169 (PIVA…PSPD) and 177 to 352 (INVS…EEHR). GTP contacts are provided by residues 10–17 (GRPNVGKS), 57–61 (DTGGL), 120–123 (NKCE), 183–190 (GRPNVGKS), 230–234 (DTAGI), and 295–298 (NKWD). The 86-residue stretch at 353–438 (RRVNTSVVNE…PIRLLWRGKK (86 aa)) folds into the KH-like domain.

This sequence belongs to the TRAFAC class TrmE-Era-EngA-EngB-Septin-like GTPase superfamily. EngA (Der) GTPase family. Associates with the 50S ribosomal subunit.

In terms of biological role, GTPase that plays an essential role in the late steps of ribosome biogenesis. The chain is GTPase Der from Crocosphaera subtropica (strain ATCC 51142 / BH68) (Cyanothece sp. (strain ATCC 51142)).